Reading from the N-terminus, the 473-residue chain is H(+)/Cl(-) exchange transporter ClcA (473 aa).

The Cytoplasmic segment spans residues M1–P32. Residues L33 to V69 traverse the membrane as a helical segment. At Q70–F76 the chain is on the periplasmic side. A helical membrane pass occupies residues L77–F100. The short motif at G106–P110 is the Selectivity filter part_1 element. Chloride is bound at residue S107. Positions I109–L116 form an intramembrane region, helical. Topologically, residues E117 to R123 are cytoplasmic. 2 consecutive transmembrane segments (helical) span residues W124–A141 and E148–F166. Positions G146 to P150 match the Selectivity filter part_2 motif. Residues R167 to T176 are Cytoplasmic-facing. 2 intramembrane regions (helical) span residues L177–A189 and P193–I201. The Cytoplasmic segment spans residues E202 to S214. Residues I215–F232 form a helical membrane-spanning segment. Residues N233 to L252 are Periplasmic-facing. Residues W253–Q281 traverse the membrane as a helical segment. Residues R282–E287 are Cytoplasmic-facing. Residues I288 to E309 traverse the membrane as a helical segment. The Periplasmic portion of the chain corresponds to P310–S329. The next 2 membrane-spanning stretches (helical) occupy residues V330–S349 and G355–A376. A Selectivity filter part_3 motif is present at residues G355–P359. Residues I356 and F357 each coordinate chloride. Residues V377–A386 are Periplasmic-facing. The helical intramembrane region spans G387–S401. The segment at residues V402–A404 is an intramembrane region (note=Loop between two helices). The segment at residues P405 to T416 is an intramembrane region (helical). Positions D417–L421 form an intramembrane region, note=Loop between two helices. A helical membrane pass occupies residues I422 to F438. At L439 to T473 the chain is on the cytoplasmic side. Position 445 (Y445) interacts with chloride.

It belongs to the chloride channel (TC 2.A.49) family. ClcA subfamily. In terms of assembly, homodimer.

Its subcellular location is the cell inner membrane. It catalyses the reaction 2 chloride(in) + H(+)(out) = 2 chloride(out) + H(+)(in). Its function is as follows. Proton-coupled chloride transporter. Functions as antiport system and exchanges two chloride ions for 1 proton. Probably acts as an electrical shunt for an outwardly-directed proton pump that is linked to amino acid decarboxylation, as part of the extreme acid resistance (XAR) response. In Salmonella agona (strain SL483), this protein is H(+)/Cl(-) exchange transporter ClcA.